A 125-amino-acid polypeptide reads, in one-letter code: Holo-[acyl-carrier-protein] synthase (125 aa).

Residues aspartate 8 and glutamate 57 each contribute to the Mg(2+) site.

This sequence belongs to the P-Pant transferase superfamily. AcpS family. Mg(2+) is required as a cofactor.

It localises to the cytoplasm. It catalyses the reaction apo-[ACP] + CoA = holo-[ACP] + adenosine 3',5'-bisphosphate + H(+). Transfers the 4'-phosphopantetheine moiety from coenzyme A to a Ser of acyl-carrier-protein. The sequence is that of Holo-[acyl-carrier-protein] synthase from Dechloromonas aromatica (strain RCB).